The sequence spans 299 residues: Delta-9 desaturase-like 5 protein (299 aa).

2 consecutive transmembrane segments (helical) span residues 31–51 and 55–75; these read ADII…LAPF and WEAL…ITFS. The Histidine box-1 motif lies at 77-82; that stretch reads HRNLAH. Positions 114–118 match the Histidine box-2 motif; it reads HRFHH. Helical transmembrane passes span 174 to 194 and 199 to 219; these read IGFH…LPYL and GVGG…CHIW. Residues 246 to 250 carry the Histidine box-3 motif; that stretch reads HNNHH.

The protein belongs to the fatty acid desaturase type 1 family. Requires Fe cation as cofactor.

Its subcellular location is the endoplasmic reticulum membrane. The protein operates within lipid metabolism; polyunsaturated fatty acid biosynthesis. The protein is Delta-9 desaturase-like 5 protein of Arabidopsis thaliana (Mouse-ear cress).